The sequence spans 503 residues: Probable cytosol aminopeptidase (503 aa).

Lys274 and Asp279 together coordinate Mn(2+). Lys286 is an active-site residue. Mn(2+) contacts are provided by Asp297, Asp356, and Glu358. Arg360 is an active-site residue.

The protein belongs to the peptidase M17 family. Mn(2+) serves as cofactor.

It localises to the cytoplasm. It catalyses the reaction Release of an N-terminal amino acid, Xaa-|-Yaa-, in which Xaa is preferably Leu, but may be other amino acids including Pro although not Arg or Lys, and Yaa may be Pro. Amino acid amides and methyl esters are also readily hydrolyzed, but rates on arylamides are exceedingly low.. It carries out the reaction Release of an N-terminal amino acid, preferentially leucine, but not glutamic or aspartic acids.. Its function is as follows. Presumably involved in the processing and regular turnover of intracellular proteins. Catalyzes the removal of unsubstituted N-terminal amino acids from various peptides. The polypeptide is Probable cytosol aminopeptidase (Burkholderia cenocepacia (strain ATCC BAA-245 / DSM 16553 / LMG 16656 / NCTC 13227 / J2315 / CF5610) (Burkholderia cepacia (strain J2315))).